A 431-amino-acid chain; its full sequence is Enolase (431 aa).

(2R)-2-phosphoglycerate is bound at residue Gln166. The Proton donor role is filled by Glu208. The Mg(2+) site is built by Asp245, Glu288, and Asp315. Residues Lys340, Arg369, Ser370, and Lys391 each contribute to the (2R)-2-phosphoglycerate site. Lys340 functions as the Proton acceptor in the catalytic mechanism.

It belongs to the enolase family. Requires Mg(2+) as cofactor.

The protein resides in the cytoplasm. It is found in the secreted. The protein localises to the cell surface. It carries out the reaction (2R)-2-phosphoglycerate = phosphoenolpyruvate + H2O. Its pathway is carbohydrate degradation; glycolysis; pyruvate from D-glyceraldehyde 3-phosphate: step 4/5. Functionally, catalyzes the reversible conversion of 2-phosphoglycerate (2-PG) into phosphoenolpyruvate (PEP). It is essential for the degradation of carbohydrates via glycolysis. The sequence is that of Enolase from Clostridium perfringens (strain 13 / Type A).